Consider the following 271-residue polypeptide: Acetyl-coenzyme A carboxylase carboxyl transferase subunit beta (271 aa).

Positions 21-271 (LWIQCPYCKQ…LGDLLALHTA (251 aa)) constitute a CoA carboxyltransferase N-terminal domain. Residues Cys-25, Cys-28, Cys-43, and Cys-46 each contribute to the Zn(2+) site. The segment at 25-46 (CPYCKQGSYRESLGNAQVCPHC) adopts a C4-type zinc-finger fold.

The protein belongs to the AccD/PCCB family. Acetyl-CoA carboxylase is a heterohexamer composed of biotin carboxyl carrier protein (AccB), biotin carboxylase (AccC) and two subunits each of ACCase subunit alpha (AccA) and ACCase subunit beta (AccD). Requires Zn(2+) as cofactor.

Its subcellular location is the cytoplasm. It carries out the reaction N(6)-carboxybiotinyl-L-lysyl-[protein] + acetyl-CoA = N(6)-biotinyl-L-lysyl-[protein] + malonyl-CoA. Its pathway is lipid metabolism; malonyl-CoA biosynthesis; malonyl-CoA from acetyl-CoA: step 1/1. Its function is as follows. Component of the acetyl coenzyme A carboxylase (ACC) complex. Biotin carboxylase (BC) catalyzes the carboxylation of biotin on its carrier protein (BCCP) and then the CO(2) group is transferred by the transcarboxylase to acetyl-CoA to form malonyl-CoA. In Lacticaseibacillus casei (strain BL23) (Lactobacillus casei), this protein is Acetyl-coenzyme A carboxylase carboxyl transferase subunit beta.